The primary structure comprises 728 residues: MSESGEMSEFGYIMELIAKGKVTIKNIERELICPACKELFTHPLILPCQHSICHKCVKELLLTLDDSFNDVGSDNSNQSSPRLRLPSPSMDKIDRINRPGWKRNSLTPRTTVFPCPGCEHDVDLGERGINGLFRNFTLETIVERYRQAARAATAIMCDLCKPPPQESTKSCMDCSASYCNECFKIHHPWGTIKAQHEYVGPTTNFRPKILMCPEHETERINMYCELCRRPVCHLCKLGGNHANHRVTTMSSAYKTLKEKLSKDIDYLIGKESQVKSQISELNLLMKETECNGERAKEEAITHFEKLFEVLEERKSSVLKAIDSSKKLRLDKFQTQMEEYQGLLENNGLVGYAQEVLKETDQSCFVQTAKQLHLRIQKATESLKSFRPAAQTSFEDYVVNTSKQTELLGELSFFSSGIDVPEINEEQSKVYNNALINWHHPEKDKADSYVLEYRKINRDDEMSWNEIEVCGTSKIIQDLENSSTYAFRVRAYKGSICSPCSRELILHTPPAPVFSFLFDEKCGYNNEHLLLNLKRDRVESRAGFNLLLAAERIQVGYYTSLDYIIGDTGITKGKHFWAFRVEPYSYLVKVGVASSDKLQEWLRSPRDAVSPRYEQDSGHDSGSEDACFDSSQPFTLVTIGMQKFFIPKSPTSSNEPENRVLPMPTSIGIFLDCDKGKVDFYDMDQMKCLYERQVDCSHTLYPAFALMGSGGIQLEEPITAKYLEYQEDM.

The RING-type; degenerate zinc-finger motif lies at 33-84 (CPACKELFTHPLILPCQHSICHKCVKELLLTLDDSFNDVGSDNSNQSSPRLR). B box-type zinc fingers lie at residues 154 to 192 (AIMC…WGTI) and 207 to 249 (PKIL…VTTM). The Zn(2+) site is built by Cys212, His215, Cys235, and His241. The stretch at 271–345 (ESQVKSQISE…MEEYQGLLEN (75 aa)) forms a coiled coil. The 58-residue stretch at 356–413 (LKETDQSCFVQTAKQLHLRIQKATESLKSFRPAAQTSFEDYVVNTSKQTELLGELSFF) folds into the COS domain. In terms of domain architecture, Fibronectin type-III spans 419-510 (VPEINEEQSK…RELILHTPPA (92 aa)). One can recognise a B30.2/SPRY domain in the interval 508–720 (PPAPVFSFLF…IQLEEPITAK (213 aa)).

This sequence belongs to the TRIM/RBCC family. In terms of assembly, interacts with CENPH. In terms of tissue distribution, highly expressed in testis, prostate and brain. Weakly expressed in kidney, lung and heart. Expressed in fetal tissues.

It is found in the cytoplasm. Its subcellular location is the cytoplasmic vesicle. It localises to the secretory vesicle. The protein resides in the acrosome. The protein localises to the cytoskeleton. The enzyme catalyses S-ubiquitinyl-[E2 ubiquitin-conjugating enzyme]-L-cysteine + [acceptor protein]-L-lysine = [E2 ubiquitin-conjugating enzyme]-L-cysteine + N(6)-ubiquitinyl-[acceptor protein]-L-lysine.. Functionally, E3 ubiquitin-protein ligase which mediates ubiquitination and subsequent proteasomal degradation of target proteins. Involved in chromosome segregation and cell cycle regulation. May play a role in the acrosome reaction and fertilization. The protein is E3 ubiquitin-protein ligase TRIM36 (TRIM36) of Homo sapiens (Human).